Reading from the N-terminus, the 176-residue chain is Large ribosomal subunit protein uL6 (176 aa).

The protein belongs to the universal ribosomal protein uL6 family. In terms of assembly, part of the 50S ribosomal subunit.

This protein binds to the 23S rRNA, and is important in its secondary structure. It is located near the subunit interface in the base of the L7/L12 stalk, and near the tRNA binding site of the peptidyltransferase center. The sequence is that of Large ribosomal subunit protein uL6 from Shewanella sediminis (strain HAW-EB3).